A 280-amino-acid polypeptide reads, in one-letter code: Lysosome-associated membrane glycoprotein 5 (280 aa).

The signal sequence occupies residues 1–29; the sequence is MDLRVRTLLGGDRLRILLMFFHVMVQTVA. Residues 30 to 235 lie on the Extracellular side of the membrane; sequence EQEVENLSGL…PVDEQEQLEE (206 aa). 4 N-linked (GlcNAc...) asparagine glycosylation sites follow: N35, N53, N102, and N127. A helical membrane pass occupies residues 236 to 256; it reads TLPLILGLILGLVIVITLVIY. Topologically, residues 257–280 are cytoplasmic; sequence HIHHKMTANQVQIPRDRSQYKHMG.

This sequence belongs to the LAMP family. Glycosylated. In brain, strongly expressed in the globus pallidus/ventral pallidum complex, the substantia nigra pars reticulata and the entopeduncular nucleus (at protein level). Expressed in the external plexiform layer of the olfactory bulb (at protein level). May be weakly expressed in neocortex and striatum (at protein level). Highly expressed in brain; not detected in other tissues tested. Detected in the cingulate cortex, cortical plate and caudate putamen. In neocortex, specifically expressed in neurons of layers II/III and V.

The protein resides in the cytoplasmic vesicle membrane. Its subcellular location is the cell membrane. It localises to the cell projection. The protein localises to the dendrite. It is found in the cytoplasmic vesicle. The protein resides in the secretory vesicle. Its subcellular location is the synaptic vesicle membrane. It localises to the growth cone membrane. The protein localises to the early endosome membrane. It is found in the recycling endosome. The protein resides in the endoplasmic reticulum-Golgi intermediate compartment membrane. Its subcellular location is the endosome membrane. Functionally, plays a role in short-term synaptic plasticity in a subset of GABAergic neurons in the brain. This Mus musculus (Mouse) protein is Lysosome-associated membrane glycoprotein 5 (Lamp5).